The sequence spans 264 residues: MSNKLTEICDTKRDHVARRKAETSFAELTARAKAADAPRGFRAALDRKVAEGGYGLIAEIKKASPSKGLIRPDFDPPAHARAYQAAGAACLSVLTDMPYFQGHDDYLVQARAACALPALRKDFIVDPWQVTEARALGADAILIIVAALDDGQMAEIEAAAIEHGMDALVEVHDADEFDRALRLRSRLIGVNNRDLRDFTIDFARTYELVGHAPAGCTFVAESGLGSKADLDAMADHGVGCFLVGESLMRQDDLAAATRRLLTGA.

The protein belongs to the TrpC family.

The enzyme catalyses 1-(2-carboxyphenylamino)-1-deoxy-D-ribulose 5-phosphate + H(+) = (1S,2R)-1-C-(indol-3-yl)glycerol 3-phosphate + CO2 + H2O. Its pathway is amino-acid biosynthesis; L-tryptophan biosynthesis; L-tryptophan from chorismate: step 4/5. This chain is Indole-3-glycerol phosphate synthase, found in Rhizorhabdus wittichii (strain DSM 6014 / CCUG 31198 / JCM 15750 / NBRC 105917 / EY 4224 / RW1) (Sphingomonas wittichii).